Reading from the N-terminus, the 100-residue chain is Noncompact myelin-associated protein (100 aa).

The Extracellular segment spans residues 1-28 (MTTATTLGDAVFSLNMTRGEDILYKSSG). A helical membrane pass occupies residues 29–49 (AIVAAIVVVVVIIVTLVLILL). Residues 50–100 (KMYNRRMRTRRELEPKSPKPPVPPALDPNSNGSQQPAAVTSDPADVPVETR) are Cytoplasmic-facing. The interval 58–100 (TRRELEPKSPKPPVPPALDPNSNGSQQPAAVTSDPADVPVETR) is disordered. Residues 77 to 87 (PNSNGSQQPAA) are compositionally biased toward polar residues.

Glycosylated. In terms of tissue distribution, expressed in the peripheral nervous system Schwann cells (at protein level).

The protein localises to the cell membrane. Plays a role in myelin formation. The polypeptide is Noncompact myelin-associated protein (Ncmap) (Rattus norvegicus (Rat)).